A 110-amino-acid chain; its full sequence is Large ribosomal subunit protein uL22 (110 aa).

It belongs to the universal ribosomal protein uL22 family. As to quaternary structure, part of the 50S ribosomal subunit.

In terms of biological role, this protein binds specifically to 23S rRNA; its binding is stimulated by other ribosomal proteins, e.g. L4, L17, and L20. It is important during the early stages of 50S assembly. It makes multiple contacts with different domains of the 23S rRNA in the assembled 50S subunit and ribosome. Its function is as follows. The globular domain of the protein is located near the polypeptide exit tunnel on the outside of the subunit, while an extended beta-hairpin is found that lines the wall of the exit tunnel in the center of the 70S ribosome. The sequence is that of Large ribosomal subunit protein uL22 from Photobacterium profundum (strain SS9).